The primary structure comprises 108 residues: Nucleoid-associated protein Mmwyl1_2533 (108 aa).

The segment at 1-22 (MFKGGMGNMMRQAQQMQENMQK) is disordered. Over residues 11-22 (RQAQQMQENMQK) the composition is skewed to polar residues.

Belongs to the YbaB/EbfC family. As to quaternary structure, homodimer.

The protein resides in the cytoplasm. The protein localises to the nucleoid. In terms of biological role, binds to DNA and alters its conformation. May be involved in regulation of gene expression, nucleoid organization and DNA protection. The chain is Nucleoid-associated protein Mmwyl1_2533 from Marinomonas sp. (strain MWYL1).